We begin with the raw amino-acid sequence, 321 residues long: Homoserine O-succinyltransferase (321 aa).

Cys-142 acts as the Acyl-thioester intermediate in catalysis. Lys-163 and Ser-192 together coordinate substrate. The Proton acceptor role is filled by His-235. Residue Glu-237 is part of the active site. Position 249 (Arg-249) interacts with substrate.

It belongs to the MetA family.

The protein localises to the cytoplasm. The enzyme catalyses L-homoserine + succinyl-CoA = O-succinyl-L-homoserine + CoA. It functions in the pathway amino-acid biosynthesis; L-methionine biosynthesis via de novo pathway; O-succinyl-L-homoserine from L-homoserine: step 1/1. Its function is as follows. Transfers a succinyl group from succinyl-CoA to L-homoserine, forming succinyl-L-homoserine. The chain is Homoserine O-succinyltransferase from Shewanella loihica (strain ATCC BAA-1088 / PV-4).